The chain runs to 32 residues: Photosystem II reaction center protein Z (32 aa).

The chain crosses the membrane as a helical span at residues Phe9–Val31.

Belongs to the PsbZ family. PSII is composed of 1 copy each of membrane proteins PsbA, PsbB, PsbC, PsbD, PsbE, PsbF, PsbH, PsbI, PsbJ, PsbK, PsbL, PsbM, PsbT, PsbY, PsbZ, Psb30/Ycf12, at least 3 peripheral proteins of the oxygen-evolving complex and a large number of cofactors. It forms dimeric complexes.

The protein resides in the plastid. It localises to the chloroplast thylakoid membrane. Its function is as follows. May control the interaction of photosystem II (PSII) cores with the light-harvesting antenna, regulates electron flow through the 2 photosystem reaction centers. PSII is a light-driven water plastoquinone oxidoreductase, using light energy to abstract electrons from H(2)O, generating a proton gradient subsequently used for ATP formation. The protein is Photosystem II reaction center protein Z of Euglena viridis (Cercaria viridis).